The sequence spans 477 residues: Glycogen synthase (477 aa).

Lys-15 contacts ADP-alpha-D-glucose.

It belongs to the glycosyltransferase 1 family. Bacterial/plant glycogen synthase subfamily.

The enzyme catalyses [(1-&gt;4)-alpha-D-glucosyl](n) + ADP-alpha-D-glucose = [(1-&gt;4)-alpha-D-glucosyl](n+1) + ADP + H(+). Its pathway is glycan biosynthesis; glycogen biosynthesis. In terms of biological role, synthesizes alpha-1,4-glucan chains using ADP-glucose. The polypeptide is Glycogen synthase (Clostridium acetobutylicum (strain ATCC 824 / DSM 792 / JCM 1419 / IAM 19013 / LMG 5710 / NBRC 13948 / NRRL B-527 / VKM B-1787 / 2291 / W)).